The sequence spans 125 residues: Ribosome-binding factor A (125 aa).

Belongs to the RbfA family. In terms of assembly, monomer. Binds 30S ribosomal subunits, but not 50S ribosomal subunits or 70S ribosomes.

It is found in the cytoplasm. Functionally, one of several proteins that assist in the late maturation steps of the functional core of the 30S ribosomal subunit. Associates with free 30S ribosomal subunits (but not with 30S subunits that are part of 70S ribosomes or polysomes). Required for efficient processing of 16S rRNA. May interact with the 5'-terminal helix region of 16S rRNA. The sequence is that of Ribosome-binding factor A from Xylella fastidiosa (strain M12).